We begin with the raw amino-acid sequence, 176 residues long: MTTSPDPYAALPKLPSFSLTSTSITDGQPLATPQVSGIMGAGGADASPQLRWSGFPSETRSFAVTVYDPDAPTLSGFWHWAVANLPANVTELPEGVGDGRELPGGALTLVNDAGMRRYVGAAPPPGHGVHRYYVAVHAVKVEKLDLPEDASPAYLGFNLFQHAIARAVIFGTYEQR.

Threonine 2 carries the post-translational modification N-acetylthreonine.

The protein belongs to the UPF0098 family.

This is UPF0098 protein Rv2140c from Mycobacterium tuberculosis (strain ATCC 25618 / H37Rv).